The following is a 34-amino-acid chain: Protamine-Y1/Y2 (34 aa).

The segment at 1 to 34 (PRRRRQASRPVRRRRRYRRSTAARRRRRVVRRRR) is disordered.

Testis.

It is found in the nucleus. It localises to the chromosome. Functionally, protamines substitute for histones in the chromatin of sperm during the haploid phase of spermatogenesis. They compact sperm DNA into a highly condensed, stable and inactive complex. The polypeptide is Protamine-Y1/Y2 (Thunnus thynnus (Atlantic bluefin tuna)).